The sequence spans 288 residues: Small ribosomal subunit protein uS2 (288 aa).

Positions 228–288 (RAGLSSDKDA…PAAEAPSTEA (61 aa)) are disordered. Low complexity predominate over residues 257 to 288 (QAAPAAEAAPAAEAQAAPAAEAPAAEAPSTEA).

The protein belongs to the universal ribosomal protein uS2 family.

This is Small ribosomal subunit protein uS2 from Rhodococcus opacus (strain B4).